A 501-amino-acid chain; its full sequence is Glycerol kinase (501 aa).

Position 12 (Thr-12) interacts with ADP. 3 residues coordinate ATP: Thr-12, Thr-13, and Ser-14. Thr-12 lines the sn-glycerol 3-phosphate pocket. Arg-16 contacts ADP. Sn-glycerol 3-phosphate is bound by residues Arg-82, Glu-83, Tyr-135, and Asp-244. Positions 82, 83, 135, 244, and 245 each coordinate glycerol. Residues Thr-266, Gly-309, Gly-409, and Asn-413 each coordinate ADP. ATP contacts are provided by Thr-266, Gly-309, and Gly-409.

Belongs to the FGGY kinase family.

The enzyme catalyses glycerol + ATP = sn-glycerol 3-phosphate + ADP + H(+). It participates in polyol metabolism; glycerol degradation via glycerol kinase pathway; sn-glycerol 3-phosphate from glycerol: step 1/1. Its activity is regulated as follows. Inhibited by fructose 1,6-bisphosphate (FBP). Its function is as follows. Key enzyme in the regulation of glycerol uptake and metabolism. Catalyzes the phosphorylation of glycerol to yield sn-glycerol 3-phosphate. This is Glycerol kinase from Coxiella burnetii (strain Dugway 5J108-111).